The sequence spans 341 residues: Biotin synthase (341 aa).

In terms of domain architecture, Radical SAM core spans 53–272 (NHVETASLLS…IAVARIMMPK (220 aa)). Cys68, Cys72, and Cys75 together coordinate [4Fe-4S] cluster. Residues Cys112, Cys143, Cys203, and Arg276 each coordinate [2Fe-2S] cluster.

The protein belongs to the radical SAM superfamily. Biotin synthase family. As to quaternary structure, homodimer. [4Fe-4S] cluster is required as a cofactor. The cofactor is [2Fe-2S] cluster.

The catalysed reaction is (4R,5S)-dethiobiotin + (sulfur carrier)-SH + 2 reduced [2Fe-2S]-[ferredoxin] + 2 S-adenosyl-L-methionine = (sulfur carrier)-H + biotin + 2 5'-deoxyadenosine + 2 L-methionine + 2 oxidized [2Fe-2S]-[ferredoxin]. It participates in cofactor biosynthesis; biotin biosynthesis; biotin from 7,8-diaminononanoate: step 2/2. Its function is as follows. Catalyzes the conversion of dethiobiotin (DTB) to biotin by the insertion of a sulfur atom into dethiobiotin via a radical-based mechanism. This Nitrobacter winogradskyi (strain ATCC 25391 / DSM 10237 / CIP 104748 / NCIMB 11846 / Nb-255) protein is Biotin synthase.